Here is a 217-residue protein sequence, read N- to C-terminus: ATP-dependent Clp protease proteolytic subunit (217 aa).

Serine 119 functions as the Nucleophile in the catalytic mechanism. Histidine 144 is an active-site residue.

The protein belongs to the peptidase S14 family. In terms of assembly, fourteen ClpP subunits assemble into 2 heptameric rings which stack back to back to give a disk-like structure with a central cavity, resembling the structure of eukaryotic proteasomes.

Its subcellular location is the cytoplasm. The enzyme catalyses Hydrolysis of proteins to small peptides in the presence of ATP and magnesium. alpha-casein is the usual test substrate. In the absence of ATP, only oligopeptides shorter than five residues are hydrolyzed (such as succinyl-Leu-Tyr-|-NHMec, and Leu-Tyr-Leu-|-Tyr-Trp, in which cleavage of the -Tyr-|-Leu- and -Tyr-|-Trp bonds also occurs).. In terms of biological role, cleaves peptides in various proteins in a process that requires ATP hydrolysis. Has a chymotrypsin-like activity. Plays a major role in the degradation of misfolded proteins. The chain is ATP-dependent Clp protease proteolytic subunit from Bordetella petrii (strain ATCC BAA-461 / DSM 12804 / CCUG 43448).